Consider the following 123-residue polypeptide: Ribosome-binding factor A (123 aa).

This sequence belongs to the RbfA family. In terms of assembly, monomer. Binds 30S ribosomal subunits, but not 50S ribosomal subunits or 70S ribosomes.

The protein localises to the cytoplasm. In terms of biological role, one of several proteins that assist in the late maturation steps of the functional core of the 30S ribosomal subunit. Associates with free 30S ribosomal subunits (but not with 30S subunits that are part of 70S ribosomes or polysomes). Required for efficient processing of 16S rRNA. May interact with the 5'-terminal helix region of 16S rRNA. The polypeptide is Ribosome-binding factor A (Cupriavidus metallidurans (strain ATCC 43123 / DSM 2839 / NBRC 102507 / CH34) (Ralstonia metallidurans)).